A 363-amino-acid chain; its full sequence is MIIDTTEVQAINSFSRSESLKEAYGLIWLLVPIFTPVSGITIGVLVIVWLEREISAGIQQRIGPEYAGPLGILQALADGTKLLFKEDLLPSRGDTRLFSIGPSIAIISILLSYSVIPFGYRLVLADLSIGVFLWIAISSIAPIGLLMSGYGSNNKYSFSGGLRAAAQSISYEIPLTLCVLSISLLSNSLSTVDIVEAQSKYGFWGWNLWRQPIGFAVFLISSLAECERLPFDLPEAEEELVAGYQTEYSGIKFGLFYVASYLNLLVSSLFVTVLYLGGWNLSIPYIFIPELFEINKVSGVFGTTIGIFITLAKAYLFLFISITTRWTLPRMRMDQLLNLGWKFLLPISLGNLLLTTSSQLFSL.

Helical transmembrane passes span 27 to 47, 98 to 118, 127 to 147, 248 to 268, 300 to 320, and 336 to 356; these read IWLL…VLVI, FSIG…VIPF, LSIG…GLLM, YSGI…LVSS, VFGT…FLFI, and LLNL…LLTT.

Belongs to the complex I subunit 1 family. In terms of assembly, NDH is composed of at least 16 different subunits, 5 of which are encoded in the nucleus.

It localises to the plastid. The protein resides in the chloroplast thylakoid membrane. The enzyme catalyses a plastoquinone + NADH + (n+1) H(+)(in) = a plastoquinol + NAD(+) + n H(+)(out). The catalysed reaction is a plastoquinone + NADPH + (n+1) H(+)(in) = a plastoquinol + NADP(+) + n H(+)(out). Its function is as follows. NDH shuttles electrons from NAD(P)H:plastoquinone, via FMN and iron-sulfur (Fe-S) centers, to quinones in the photosynthetic chain and possibly in a chloroplast respiratory chain. The immediate electron acceptor for the enzyme in this species is believed to be plastoquinone. Couples the redox reaction to proton translocation, and thus conserves the redox energy in a proton gradient. In Platanus occidentalis (Sycamore), this protein is NAD(P)H-quinone oxidoreductase subunit 1, chloroplastic.